Reading from the N-terminus, the 298-residue chain is tRNA pseudouridine synthase B (298 aa).

Asp42 acts as the Nucleophile in catalysis.

The protein belongs to the pseudouridine synthase TruB family. Type 1 subfamily.

The catalysed reaction is uridine(55) in tRNA = pseudouridine(55) in tRNA. In terms of biological role, responsible for synthesis of pseudouridine from uracil-55 in the psi GC loop of transfer RNAs. The polypeptide is tRNA pseudouridine synthase B (Mycobacterium tuberculosis (strain CDC 1551 / Oshkosh)).